A 555-amino-acid polypeptide reads, in one-letter code: NAD-dependent protein deacetylase sirtuin-1 (555 aa).

Residues 39-46 (PPKRKKRK) carry the Nuclear localization signal motif. One can recognise a Deacetylase sirtuin-type domain in the interval 44–304 (KRKDINTIED…NELCHRLGGE (261 aa)). Lysine 46 is modified (N6-acetyllysine). The required for interaction with the sumoylated form of CCAR2 stretch occupies residues 64–67 (IIVL). Residues 69 to 88 (GAGV…DGIY) and 153 to 156 (QNID) contribute to the NAD(+) site. The active-site Proton acceptor is the histidine 171. Residues cysteine 179 and cysteine 182 each coordinate Zn(2+). An N6-acetyllysine modification is found at lysine 185. Zn(2+) is bound by residues cysteine 203 and cysteine 206. Cysteine 203 and cysteine 206 each carry S-nitrosocysteine. At lysine 238 the chain carries N6-acetyllysine. A Nuclear export signal motif is present at residues 241-247 (VDLLIVI). NAD(+) is bound by residues 248-250 (GSS), 273-275 (NRE), and cysteine 290. Lysine 321 carries the post-translational modification N6-acetyllysine. Residues 335-354 (LPPTPLHISEDSSSPERTVP) are disordered. Threonine 338 carries the phosphothreonine modification. Serine 343 bears the Phosphoserine mark. Over residues 345-354 (DSSSPERTVP) the composition is skewed to polar residues. The residue at position 352 (threonine 352) is a Phosphothreonine. Position 417 is an N6-acetyllysine (lysine 417). 2 positions are modified to phosphoserine: serine 466 and serine 468. The tract at residues 469–529 (EDDALSSSSC…GGSGADGGDQ (61 aa)) is disordered. Over residues 473-493 (LSSSSCGSNSDSGTCQSPSLE) the composition is skewed to low complexity. The span at 494-514 (EPLEDESEIEEFYNGLEDDAD) shows a compositional bias: acidic residues. Phosphoserine is present on serine 552.

It belongs to the sirtuin family. Class I subfamily. As to quaternary structure, interacts with XBP1 isoform 2. Found in a complex with PCAF and MYOD1. Interacts with FOXO1; the interaction deacetylates FOXO1, resulting in its nuclear retention and promotion of its transcriptional activity Component of the eNoSC complex, composed of SIRT1, SUV39H1 and RRP8. Interacts with HES1, HEY2 and PML. Interacts with RPS19BP1/AROS. Interacts with CCAR2 (via N-terminus); the interaction disrupts the interaction between SIRT1 and p53/TP53. Interacts with SETD7; the interaction induces the dissociation of SIRT1 from p53/TP53 and increases p53/TP53 activity. Interacts with MYCN, NR1I2, CREBZF, TSC2, TLE1, FOS, JUN, NR0B2, PPARG, NCOR, IRS1, IRS2 and NMNAT1. Interacts with HNF1A; the interaction occurs under nutrient restriction. Interacts with SUZ12; the interaction mediates the association with the PRC4 histone methylation complex which is specific as an association with PCR2 and PCR3 complex variants is not found. Interacts with HIV-1 tat. Interacts with BCL6; leads to a epigenetic repression of specific target genes. Interacts with CLOCK, BMAL1 and PER2. Interacts with PPARA; the interaction seems to be modulated by NAD(+) levels. Interacts with NR1H3 and this interaction is inhibited in the presence of CCAR2. Interacts with CHEK2. Interacts with p53/TP53. Exhibits a preferential interaction with sumoylated CCAR2 over its unmodified form. Interacts with PACS2. Interacts with SIRT7. Interacts with PUS7. Interacts with TULP3. Interacts with MORN3; the interaction enhances the ubiquitination of p53/TP53. Zn(2+) serves as cofactor. Post-translationally, methylated on multiple lysine residues; methylation is enhanced after DNA damage and is dispensable for deacetylase activity toward p53/TP53. Phosphorylated. Phosphorylated by STK4/MST1, resulting in inhibition of SIRT1-mediated p53/TP53 deacetylation. Phosphorylation by MAPK8/JNK1 at Thr-338 leads to increased nuclear localization and enzymatic activity. Phosphorylation at Thr-338 by DYRK1A and DYRK3 activates deacetylase activity and promotes cell survival. Phosphorylated by CaMK2, leading to increased p53/TP53 and NF-kappa-B p65/RELA deacetylation activity. In terms of processing, S-nitrosylated by GAPDH, leading to inhibit the NAD-dependent protein deacetylase activity. Post-translationally, acetylated at various Lys residues. Deacetylated via an autocatalytic mechanism. Autodeacetylation at Lys-46 promotes its protein deacetylase activity. Ubiquitinated; leading to degradation. Deubiquitinated by USP22; leading to stabilization.

It is found in the nucleus. It localises to the PML body. The protein localises to the cytoplasm. It catalyses the reaction N(6)-acetyl-L-lysyl-[protein] + NAD(+) + H2O = 2''-O-acetyl-ADP-D-ribose + nicotinamide + L-lysyl-[protein]. It carries out the reaction N(6)-propanoyl-L-lysyl-[protein] + NAD(+) + H2O = 3''-O-propanoyl-ADP-D-ribose + nicotinamide + L-lysyl-[protein]. The catalysed reaction is N(6)-(2E)-butenoyl-L-lysyl-[protein] + NAD(+) + H2O = 2''-O-(2E)-but-2-enoyl-ADP-D-ribose + nicotinamide + L-lysyl-[protein]. Its activity is regulated as follows. Inhibited by nicotinamide. Activated by resveratrol (3,5,4'-trihydroxy-trans-stilbene), butein (3,4,2',4'-tetrahydroxychalcone), piceatannol (3,5,3',4'-tetrahydroxy-trans-stilbene), Isoliquiritigenin (4,2',4'-trihydroxychalcone), fisetin (3,7,3',4'-tetrahydroxyflavone) and quercetin (3,5,7,3',4'-pentahydroxyflavone). MAPK8/JNK1 and RPS19BP1/AROS act as positive regulators of deacetylation activity. Negatively regulated by CCAR2. NAD-dependent protein deacetylase that links transcriptional regulation directly to intracellular energetics and participates in the coordination of several separated cellular functions such as cell cycle, response to DNA damage, metabolism, apoptosis and autophagy. Can modulate chromatin function through deacetylation of histones and can promote alterations in the methylation of histones and DNA, leading to transcriptional repression. Deacetylates a broad range of transcription factors and coregulators, thereby regulating target gene expression positively and negatively. Serves as a sensor of the cytosolic ratio of NAD(+)/NADH which is altered by glucose deprivation and metabolic changes associated with caloric restriction. Is essential in skeletal muscle cell differentiation and in response to low nutrients mediates the inhibitory effect on skeletal myoblast differentiation which also involves 5'-AMP-activated protein kinase (AMPK) and nicotinamide phosphoribosyltransferase (NAMPT). Component of the eNoSC (energy-dependent nucleolar silencing) complex, a complex that mediates silencing of rDNA in response to intracellular energy status and acts by recruiting histone-modifying enzymes. The eNoSC complex is able to sense the energy status of cell: upon glucose starvation, elevation of NAD(+)/NADP(+) ratio activates SIRT1, leading to histone H3 deacetylation followed by dimethylation of H3 at 'Lys-9' (H3K9me2) by SUV39H1 and the formation of silent chromatin in the rDNA locus. Deacetylates 'Lys-266' of SUV39H1, leading to its activation. Inhibits skeletal muscle differentiation by deacetylating PCAF and MYOD1. Deacetylates H2A and 'Lys-26' of H1-4. Deacetylates 'Lys-16' of histone H4 (in vitro). Involved in NR0B2/SHP corepression function through chromatin remodeling: Recruited to LRH1 target gene promoters by NR0B2/SHP thereby stimulating histone H3 and H4 deacetylation leading to transcriptional repression. Proposed to contribute to genomic integrity via positive regulation of telomere length; however, reports on localization to pericentromeric heterochromatin are conflicting. Proposed to play a role in constitutive heterochromatin (CH) formation and/or maintenance through regulation of the available pool of nuclear SUV39H1. Upon oxidative/metabolic stress decreases SUV39H1 degradation by inhibiting SUV39H1 polyubiquitination by MDM2. This increase in SUV39H1 levels enhances SUV39H1 turnover in CH, which in turn seems to accelerate renewal of the heterochromatin which correlates with greater genomic integrity during stress response. Deacetylates 'Lys-382' of p53/TP53 and impairs its ability to induce transcription-dependent proapoptotic program and modulate cell senescence. Deacetylates TAF1B and thereby represses rDNA transcription by the RNA polymerase I. Deacetylates MYC, promotes the association of MYC with MAX and decreases MYC stability leading to compromised transformational capability. Deacetylates FOXO3 in response to oxidative stress thereby increasing its ability to induce cell cycle arrest and resistance to oxidative stress but inhibiting FOXO3-mediated induction of apoptosis transcriptional activity; also leading to FOXO3 ubiquitination and protesomal degradation. Appears to have a similar effect on MLLT7/FOXO4 in regulation of transcriptional activity and apoptosis. Deacetylates DNMT1; thereby impairs DNMT1 methyltransferase-independent transcription repressor activity, modulates DNMT1 cell cycle regulatory function and DNMT1-mediated gene silencing. Deacetylates RELA/NF-kappa-B p65 thereby inhibiting its transactivating potential and augments apoptosis in response to TNF-alpha. Deacetylates HIF1A, KAT5/TIP60, RB1 and HIC1. Deacetylates FOXO1 resulting in its nuclear retention and enhancement of its transcriptional activity leading to increased gluconeogenesis in liver. Inhibits E2F1 transcriptional activity and apoptotic function, possibly by deacetylation. Involved in HES1- and HEY2-mediated transcriptional repression. In cooperation with MYCN seems to be involved in transcriptional repression of DUSP6/MAPK3 leading to MYCN stabilization by phosphorylation at 'Ser-62'. Deacetylates MEF2D. Required for antagonist-mediated transcription suppression of AR-dependent genes which may be linked to local deacetylation of histone H3. Represses HNF1A-mediated transcription. Required for the repression of ESRRG by CREBZF. Deacetylates NR1H3 AND NR1H2 and deacetylation of NR1H3 at 'Lys-434' positively regulates transcription of NR1H3:RXR target genes, promotes NR1H3 proteasomal degradation and results in cholesterol efflux; a promoter clearing mechanism after reach round of transcription is proposed. Involved in lipid metabolism: deacetylates LPIN1, thereby inhibiting diacylglycerol synthesis. Implicated in regulation of adipogenesis and fat mobilization in white adipocytes by repression of PPARG which probably involves association with NCOR1 and SMRT/NCOR2. Deacetylates p300/EP300 and PRMT1. Deacetylates ACSS2 leading to its activation, and HMGCS1 deacetylation. Involved in liver and muscle metabolism. Through deacetylation and activation of PPARGC1A is required to activate fatty acid oxidation in skeletal muscle under low-glucose conditions and is involved in glucose homeostasis. Involved in regulation of PPARA and fatty acid beta-oxidation in liver. Involved in positive regulation of insulin secretion in pancreatic beta cells in response to glucose; the function seems to imply transcriptional repression of UCP2. Proposed to deacetylate IRS2 thereby facilitating its insulin-induced tyrosine phosphorylation. Deacetylates SREBF1 isoform SREBP-1C thereby decreasing its stability and transactivation in lipogenic gene expression. Involved in DNA damage response by repressing genes which are involved in DNA repair, such as XPC and TP73, deacetylating XRCC6/Ku70, and facilitating recruitment of additional factors to sites of damaged DNA, such as SIRT1-deacetylated NBN can recruit ATM to initiate DNA repair and SIRT1-deacetylated XPA interacts with RPA2. Also involved in DNA repair of DNA double-strand breaks by homologous recombination and specifically single-strand annealing independently of XRCC6/Ku70 and NBN. Promotes DNA double-strand breaks by mediating deacetylation of SIRT6. Transcriptional suppression of XPC probably involves an E2F4:RBL2 suppressor complex and protein kinase B (AKT) signaling. Transcriptional suppression of TP73 probably involves E2F4 and PCAF. Deacetylates WRN thereby regulating its helicase and exonuclease activities and regulates WRN nuclear translocation in response to DNA damage. Deacetylates APEX1 at 'Lys-6' and 'Lys-7' and stimulates cellular AP endonuclease activity by promoting the association of APEX1 to XRCC1. Catalyzes deacetylation of ERCC4/XPF, thereby impairing interaction with ERCC1 and nucleotide excision repair (NER). Increases p53/TP53-mediated transcription-independent apoptosis by blocking nuclear translocation of cytoplasmic p53/TP53 and probably redirecting it to mitochondria. Deacetylates XRCC6/Ku70 at 'Lys-539' and 'Lys-542' causing it to sequester BAX away from mitochondria thereby inhibiting stress-induced apoptosis. Is involved in autophagy, presumably by deacetylating ATG5, ATG7 and MAP1LC3B/ATG8. Deacetylates AKT1 which leads to enhanced binding of AKT1 and PDK1 to PIP3 and promotes their activation. Proposed to play role in regulation of STK11/LBK1-dependent AMPK signaling pathways implicated in cellular senescence which seems to involve the regulation of the acetylation status of STK11/LBK1. Can deacetylate STK11/LBK1 and thereby increase its activity, cytoplasmic localization and association with STRAD; however, the relevance of such activity in normal cells is unclear. In endothelial cells is shown to inhibit STK11/LBK1 activity and to promote its degradation. Deacetylates SMAD7 at 'Lys-64' and 'Lys-70' thereby promoting its degradation. Deacetylates CIITA and augments its MHC class II transactivation and contributes to its stability. Deacetylates MECOM/EVI1. Deacetylates PML at 'Lys-487' and this deacetylation promotes PML control of PER2 nuclear localization. During the neurogenic transition, represses selective NOTCH1-target genes through histone deacetylation in a BCL6-dependent manner and leading to neuronal differentiation. Regulates the circadian expression of several core clock genes, including BMAL1, RORC, PER2 and CRY1 and plays a critical role in maintaining a controlled rhythmicity in histone acetylation, thereby contributing to circadian chromatin remodeling. Deacetylates BMAL1 and histones at the circadian gene promoters in order to facilitate repression by inhibitory components of the circadian oscillator. Deacetylates PER2, facilitating its ubiquitination and degradation by the proteasome. Protects cardiomyocytes against palmitate-induced apoptosis. Deacetylates XBP1 isoform 2; deacetylation decreases protein stability of XBP1 isoform 2 and inhibits its transcriptional activity. Deacetylates PCK1 and directs its activity toward phosphoenolpyruvate production promoting gluconeogenesis. Involved in the CCAR2-mediated regulation of PCK1 and NR1D1. Deacetylates CTNB1 at 'Lys-49'. In POMC (pro-opiomelanocortin) neurons, required for leptin-induced activation of PI3K signaling. In addition to protein deacetylase activity, also acts as a protein-lysine deacylase by mediating protein depropionylation and decrotonylation. Mediates depropionylation of Osterix (SP7). Catalyzes decrotonylation of histones; it however does not represent a major histone decrotonylase. Deacetylates SOX9; promoting SOX9 nuclear localization and transactivation activity. Involved in the regulation of centrosome duplication. Deacetylates CENATAC in G1 phase, allowing for SASS6 accumulation on the centrosome and subsequent procentriole assembly. Deacetylates NDC80/HEC1. This Rattus norvegicus (Rat) protein is NAD-dependent protein deacetylase sirtuin-1.